Consider the following 74-residue polypeptide: Protein translocase subunit SecE (74 aa).

Over 1–36 the chain is Cytoplasmic; the sequence is MKTDFNQKIEQLKEFIEECRRVWLVLKKPTKDEYLA. Residues 37-62 form a helical membrane-spanning segment; that stretch reads VAKVTALGISLLGIIGYIIHVPATYI. The Extracellular portion of the chain corresponds to 63-74; it reads KGILKPPTTPRV.

The protein belongs to the SecE/SEC61-gamma family. Component of the Sec protein translocase complex. Heterotrimer consisting of alpha (SecY), beta (SecG) and gamma (SecE) subunits. The heterotrimers can form oligomers, although 1 heterotrimer is thought to be able to translocate proteins. Interacts with the ribosome. May interact with SecDF, and other proteins may be involved.

The protein resides in the cell membrane. In terms of biological role, essential subunit of the protein translocation channel SecYEG. Clamps together the 2 halves of SecY. May contact the channel plug during translocation. The sequence is that of Protein translocase subunit SecE from Methanocaldococcus jannaschii (strain ATCC 43067 / DSM 2661 / JAL-1 / JCM 10045 / NBRC 100440) (Methanococcus jannaschii).